We begin with the raw amino-acid sequence, 294 residues long: Eukaryotic translation initiation factor 3 subunit F (294 aa).

Positions 20–163 (VTVTAQALFQ…IDPSKNSGNC (144 aa)) constitute an MPN domain.

The protein belongs to the eIF-3 subunit F family. Component of the eukaryotic translation initiation factor 3 (eIF-3) complex.

It is found in the cytoplasm. Functionally, component of the eukaryotic translation initiation factor 3 (eIF-3) complex, which is involved in protein synthesis of a specialized repertoire of mRNAs and, together with other initiation factors, stimulates binding of mRNA and methionyl-tRNAi to the 40S ribosome. The eIF-3 complex specifically targets and initiates translation of a subset of mRNAs involved in cell proliferation. The protein is Eukaryotic translation initiation factor 3 subunit F of Yarrowia lipolytica (strain CLIB 122 / E 150) (Yeast).